The following is a 332-amino-acid chain: Caffeoylshikimate esterase (332 aa).

Positions 1-13 (MPSEAESSANSAP) are enriched in low complexity. The segment at 1–26 (MPSEAESSANSAPATPPPPPNFWGTM) is disordered. Catalysis depends on Ser147, which acts as the Nucleophile. Active-site charge relay system residues include Asp268 and His298.

This sequence belongs to the AB hydrolase superfamily. Monoacylglycerol lipase family. As to quaternary structure, interacts with ACBP2. As to expression, expressed in vasculature of roots and leaves, stems, flowers and siliques.

The protein localises to the cell membrane. It carries out the reaction 5-O-[(E)-caffeoyl]-shikimate + H2O = shikimate + (E)-caffeate + H(+). Functionally, esterase involved in the biosynthesis of lignin. Hydrolyzes caffeoylshikimate into caffeate and shikimate. Together with 4-coumarate--CoA ligase (4CL), acts on an alternative reaction for the formation of caffeoyl-CoA and bypasses the second reaction of shikimate O-hydroxycinnamoyltransferase (HST). Also accepts 4-coumaroylshikimate as substrate, but with lower activity. According to PubMed:20345607 and PubMed:22915575, possesses monoacylglycerol O-acyltransferase, monoacylglycerol lipase and lysophospholipase activities in vitro. With the association of ACBP2, may promote the degradation of lysophosphatidylcholine and detoxify the peroxidized membrane in response to cadmium-induced oxidative stress. However these results require additional confirmation in vivo. The chain is Caffeoylshikimate esterase (CSE) from Arabidopsis thaliana (Mouse-ear cress).